Here is a 150-residue protein sequence, read N- to C-terminus: uncharacterized protein (150 aa).

The 62-residue stretch at 5-66 folds into the HTH asnC-type domain; it reads LDKVDRRLLE…KPNYKKLNLG (62 aa). A DNA-binding region (H-T-H motif) is located at residues 24-43; sequence IATLSKKLGIPRTTVHYRIK.

This is an uncharacterized protein from Pyrococcus horikoshii (strain ATCC 700860 / DSM 12428 / JCM 9974 / NBRC 100139 / OT-3).